The following is a 95-amino-acid chain: Acylphosphatase (95 aa).

The region spanning 5-93 (RAHLFIRGKV…GEFQDFRILP (89 aa)) is the Acylphosphatase-like domain. Residues Arg-20 and Asn-38 contribute to the active site.

The protein belongs to the acylphosphatase family.

It carries out the reaction an acyl phosphate + H2O = a carboxylate + phosphate + H(+). The chain is Acylphosphatase (acyP) from Pyrobaculum arsenaticum (strain DSM 13514 / JCM 11321 / PZ6).